Here is a 156-residue protein sequence, read N- to C-terminus: 6,7-dimethyl-8-ribityllumazine synthase (156 aa).

Residues phenylalanine 22, 57–59, and 81–83 each bind 5-amino-6-(D-ribitylamino)uracil; these read AYE and TVI. Residue 86-87 coordinates (2S)-2-hydroxy-3-oxobutyl phosphate; that stretch reads GT. The active-site Proton donor is the histidine 89. Phenylalanine 114 is a 5-amino-6-(D-ribitylamino)uracil binding site. Residue arginine 128 participates in (2S)-2-hydroxy-3-oxobutyl phosphate binding.

This sequence belongs to the DMRL synthase family. In terms of assembly, forms an icosahedral capsid composed of 60 subunits, arranged as a dodecamer of pentamers.

It catalyses the reaction (2S)-2-hydroxy-3-oxobutyl phosphate + 5-amino-6-(D-ribitylamino)uracil = 6,7-dimethyl-8-(1-D-ribityl)lumazine + phosphate + 2 H2O + H(+). Its pathway is cofactor biosynthesis; riboflavin biosynthesis; riboflavin from 2-hydroxy-3-oxobutyl phosphate and 5-amino-6-(D-ribitylamino)uracil: step 1/2. In terms of biological role, catalyzes the formation of 6,7-dimethyl-8-ribityllumazine by condensation of 5-amino-6-(D-ribitylamino)uracil with 3,4-dihydroxy-2-butanone 4-phosphate. This is the penultimate step in the biosynthesis of riboflavin. In Proteus mirabilis (strain HI4320), this protein is 6,7-dimethyl-8-ribityllumazine synthase.